Here is a 214-residue protein sequence, read N- to C-terminus: Response regulator GacA (214 aa).

The 117-residue stretch at 3-119 (KVLVVDDHDL…EMVQAIRQVF (117 aa)) folds into the Response regulatory domain. At aspartate 54 the chain carries 4-aspartylphosphate. One can recognise an HTH luxR-type domain in the interval 143–208 (HDSPFDSLSE…ELALLAVRHG (66 aa)). The H-T-H motif DNA-binding region spans 167–186 (VQSISDKLCLSPKTVNTYRY).

Functionally, positively controls the production of the autoinducer N-butyryl-homoserine lactone and the formation of the virulence factors pyocyanine, cyanide, and lipase. This Pseudomonas aeruginosa (strain ATCC 15692 / DSM 22644 / CIP 104116 / JCM 14847 / LMG 12228 / 1C / PRS 101 / PAO1) protein is Response regulator GacA (gacA).